Consider the following 141-residue polypeptide: Large ribosomal subunit protein uL22 (141 aa).

Positions 110-141 (EEKKTVAKKTTTTKAPAKKTTSTKKATAKKES) are disordered. Residues 117-134 (KKTTTTKAPAKKTTSTKK) are compositionally biased toward low complexity.

The protein belongs to the universal ribosomal protein uL22 family. As to quaternary structure, part of the 50S ribosomal subunit.

Functionally, this protein binds specifically to 23S rRNA; its binding is stimulated by other ribosomal proteins, e.g. L4, L17, and L20. It is important during the early stages of 50S assembly. It makes multiple contacts with different domains of the 23S rRNA in the assembled 50S subunit and ribosome. In terms of biological role, the globular domain of the protein is located near the polypeptide exit tunnel on the outside of the subunit, while an extended beta-hairpin is found that lines the wall of the exit tunnel in the center of the 70S ribosome. The polypeptide is Large ribosomal subunit protein uL22 (Campylobacter jejuni subsp. doylei (strain ATCC BAA-1458 / RM4099 / 269.97)).